The sequence spans 332 residues: Probable cytosolic iron-sulfur protein assembly protein 1 (332 aa).

7 WD repeats span residues 9–48, 52–93, 98–137, 144–183, 188–230, 257–295, and 302–332; these read GHTD…LVTT, GHNR…WQFL, GHEN…DEFE, DHTQ…WICV, GHES…GGTG, AHTR…QWVV, and AHGV…IWEV.

It belongs to the WD repeat CIA1 family. Interacts with NAR1.

It localises to the cytoplasm. The protein resides in the nucleus. Functionally, essential component of the cytosolic iron-sulfur (Fe/S) protein assembly machinery. Required for the maturation of extramitochondrial Fe/S proteins. This Yarrowia lipolytica (strain CLIB 122 / E 150) (Yeast) protein is Probable cytosolic iron-sulfur protein assembly protein 1.